We begin with the raw amino-acid sequence, 293 residues long: Magnetosome protein MamB (293 aa).

Over 1–12 the chain is Cytoplasmic; the sequence is MTTAACRKCRDE. Residues 1–214 are transmembrane domain (TMD); the sequence is MTTAACRKCR…GLMDTSVEND (214 aa). The helical transmembrane segment at 13–33 threads the bilayer; it reads VIWWAFFINIGQTTYKGVLGV. At 34–78 the chain is on the lumenal side; the sequence is LSGSAALVADAMHSGADVVATLVTMFSVKVSDKKADEKYPFGYGN. Residues 79 to 99 form a helical membrane-spanning segment; sequence IQFIASSIVGLILFFGALYLM. Residues 100-105 are Cytoplasmic-facing; sequence YESTMQ. Residues 106–126 form a helical membrane-spanning segment; sequence IIAGNTSSPSPFAVLGAIVSI. The Lumenal segment spans residues 127–158; that stretch reads ATNELMFRYQSCVGRQNNSPAIIANAWDNRSD. A helical transmembrane segment spans residues 159-179; it reads ALSSVAVLIGIVAAVVGFPIA. Residues 180 to 293 are Cytoplasmic-facing; the sequence is DRLAAIGVGI…VGVTPVRIAA (114 aa). The segment at 215 to 293 is C-terminal domain (CTD); sequence VLVDAYNIAK…VGVTPVRIAA (79 aa). Zn(2+) contacts are provided by H245, D247, and H283.

This sequence belongs to the cation diffusion facilitator (CDF) transporter (TC 2.A.4) family. In terms of assembly, the isolated C-terminal domain (approximately 213-293) forms homodimers. Forms heterodimers with MamM.

It localises to the magnetosome membrane. Functionally, plays a dual, essential role in magnetosome formation; required for magnetosome vesicle formation as well as biomineralization. Probably binds and transports iron. Requires heterodimerization with MamM for stability. The polypeptide is Magnetosome protein MamB (mamB) (Magnetospira sp. (strain QH-2) (Marine magnetic spirillum (strain QH-2))).